A 392-amino-acid polypeptide reads, in one-letter code: Quinolinate synthase (392 aa).

The disordered stretch occupies residues 1 to 23 (MVDLPTTTPPAQPTTGNDEVDAL). Positions 57 and 74 each coordinate iminosuccinate. Residue Cys131 participates in [4Fe-4S] cluster binding. Residues 163–165 (YIN) and Ser184 each bind iminosuccinate. Cys254 contacts [4Fe-4S] cluster. Residues 280 to 282 (HPE) and Thr297 contribute to the iminosuccinate site. Cys344 provides a ligand contact to [4Fe-4S] cluster.

Belongs to the quinolinate synthase family. Type 3 subfamily. Requires [4Fe-4S] cluster as cofactor.

It is found in the cytoplasm. The catalysed reaction is iminosuccinate + dihydroxyacetone phosphate = quinolinate + phosphate + 2 H2O + H(+). It functions in the pathway cofactor biosynthesis; NAD(+) biosynthesis; quinolinate from iminoaspartate: step 1/1. Its function is as follows. Catalyzes the condensation of iminoaspartate with dihydroxyacetone phosphate to form quinolinate. This chain is Quinolinate synthase, found in Rhodopirellula baltica (strain DSM 10527 / NCIMB 13988 / SH1).